The chain runs to 2617 residues: Ubiquitin carboxyl-terminal hydrolase 24 (2617 aa).

One can recognise a UBA domain in the interval 3-44 (SEEEQHMTTLLCMGFSDPATIRKALRLAKNDINEAVALLTNE). The tract at residues 45–99 (RPGLDYGGYEPMDSGGPSPGPGGGPRGDSGSDGSGPSRGGSTGGGGGFDPPPAYH) is disordered. A phosphoserine mark is found at Ser62 and Ser85. Over residues 65–92 (PGGGPRGDSGSDGSGPSRGGSTGGGGGF) the composition is skewed to gly residues. A Phosphotyrosine modification is found at Tyr939. 2 disordered regions span residues 1030–1056 (KTSG…SGAF) and 1127–1148 (LLSE…QQHQ). Composition is skewed to low complexity over residues 1031 to 1056 (TSGS…SGAF) and 1128 to 1148 (LSET…QQHQ). Residues Ser1138 and Ser1282 each carry the phosphoserine modification. The region spanning 1686–2039 (VGLRNGGATC…NAYMLFYQRV (354 aa)) is the USP domain. Cys1695 functions as the Nucleophile in the catalytic mechanism. A disordered region spans residues 1920–1942 (QDSSSEVGENGRNMDQGGGGSPR). Ser1940 is modified (phosphoserine). Residue His1967 is the Proton acceptor of the active site. Residues Ser2044, Ser2074, and Ser2558 each carry the phosphoserine modification. Positions 2060 to 2087 (AEDLSLSAPSSPEISPQSSPRPHRPNND) are disordered. The span at 2066-2079 (SAPSSPEISPQSSP) shows a compositional bias: low complexity. Thr2562 bears the Phosphothreonine mark. The tract at residues 2572-2617 (EKEQSGSSNGSESSPANENGERHLQQGSESPMMIGELRSDLDDVDP) is disordered. The segment covering 2576–2589 (SGSSNGSESSPANE) has biased composition (low complexity). At Ser2601 the chain carries Phosphoserine. Residues 2608–2617 (LRSDLDDVDP) are compositionally biased toward basic and acidic residues.

The protein belongs to the peptidase C19 family.

The catalysed reaction is Thiol-dependent hydrolysis of ester, thioester, amide, peptide and isopeptide bonds formed by the C-terminal Gly of ubiquitin (a 76-residue protein attached to proteins as an intracellular targeting signal).. Functionally, protease that can remove conjugated ubiquitin from target proteins and polyubiquitin chains. Deubiquitinates DDB2, preventing its proteasomal degradation. The sequence is that of Ubiquitin carboxyl-terminal hydrolase 24 (Usp24) from Mus musculus (Mouse).